We begin with the raw amino-acid sequence, 445 residues long: MASELINRRHETDQPTADAYYPKPIKPWFTVTRPMRYMLREQRLIFVLVGIAIATLVFTIFPRSTQSTPYSDPFSGYGIRPDESYVPAIQAQRKPSLEYLNRIGATGGKIPLGLKRKGLRVVVTGGAGFVGSHLVDRLMARGDTVIVVDNFFTGRKENVMHHFSNPNFEMIRHDVVEPILLEVDQIYHLACPASPVHYKFNPVKTIKTNVVGTLNMLGLAKRVGARFLLTSTSEVYGDPLQHPQVETYWGNVNPIGVRSCYDEGKRTAETLTMDYHRGANVEVRIARIFNTYGPRMCIDDGRVVSNFVAQALRKEPLTVYGDGKQTRSFQFVSDLVEGLMRLMEGEHVGPFNLGNPGEFTMLELAKVVQETIDPNANIEFRPNTEDDPHKRKPDITKAKELLGWEPKVSLRQGLPLMVKDFRQRVFGDQKEGSSAAATTTKTTSA.

An N-acetylalanine modification is found at alanine 2. The Cytoplasmic segment spans residues 2–43 (ASELINRRHETDQPTADAYYPKPIKPWFTVTRPMRYMLREQR). Residues 44-64 (LIFVLVGIAIATLVFTIFPRS) form a helical; Signal-anchor for type II membrane protein membrane-spanning segment. Over 65–445 (TQSTPYSDPF…AATTTKTTSA (381 aa)) the chain is Lumenal. Position 149 to 174 (149 to 174 (DNFFTGRKENVMHHFSNPNFEMIRHD)) interacts with NAD(+). Arginine 258 lines the substrate pocket. Tyrosine 261 acts as the Proton acceptor in catalysis. NAD(+) is bound at residue 261 to 265 (YDEGK). Asparagine 290 provides a ligand contact to substrate. Arginine 302 serves as a coordination point for NAD(+). Residues 303–307 (VVSNF), 320–327 (YGDGKQTR), and 387–391 (DPHKR) each bind substrate.

Belongs to the NAD(P)-dependent epimerase/dehydratase family. UDP-glucuronic acid decarboxylase subfamily. As to quaternary structure, homodimer. NAD(+) is required as a cofactor. As to expression, ubiquitous.

The protein resides in the golgi apparatus. It is found in the golgi stack membrane. The enzyme catalyses UDP-alpha-D-glucuronate + H(+) = UDP-alpha-D-xylose + CO2. It functions in the pathway nucleotide-sugar biosynthesis; UDP-alpha-D-xylose biosynthesis; UDP-alpha-D-xylose from UDP-alpha-D-glucuronate: step 1/1. Functionally, catalyzes the NAD-dependent decarboxylation of UDP-glucuronic acid to UDP-xylose. Necessary for the biosynthesis of the core tetrasaccharide in glycosaminoglycan biosynthesis. The protein is UDP-glucuronic acid decarboxylase 2 (UXS2) of Arabidopsis thaliana (Mouse-ear cress).